Reading from the N-terminus, the 762-residue chain is 5-methyltetrahydropteroyltriglutamate--homocysteine methyltransferase (762 aa).

5-methyltetrahydropteroyltri-L-glutamate is bound by residues 17-20 (REWK) and Lys-111. L-homocysteine is bound by residues 435 to 437 (IGS) and Glu-488. Residues 435 to 437 (IGS) and Glu-488 each bind L-methionine. 5-methyltetrahydropteroyltri-L-glutamate is bound by residues 519 to 520 (RC) and Trp-565. Asp-603 lines the L-homocysteine pocket. L-methionine is bound at residue Asp-603. A 5-methyltetrahydropteroyltri-L-glutamate-binding site is contributed by Glu-609. His-645, Cys-647, and Glu-669 together coordinate Zn(2+). His-698 serves as the catalytic Proton donor. Residue Cys-730 coordinates Zn(2+).

It belongs to the vitamin-B12 independent methionine synthase family. Zn(2+) serves as cofactor.

The enzyme catalyses 5-methyltetrahydropteroyltri-L-glutamate + L-homocysteine = tetrahydropteroyltri-L-glutamate + L-methionine. The protein operates within amino-acid biosynthesis; L-methionine biosynthesis via de novo pathway; L-methionine from L-homocysteine (MetE route): step 1/1. Its function is as follows. Catalyzes the transfer of a methyl group from 5-methyltetrahydrofolate to homocysteine resulting in methionine formation. This Bacillus cytotoxicus (strain DSM 22905 / CIP 110041 / 391-98 / NVH 391-98) protein is 5-methyltetrahydropteroyltriglutamate--homocysteine methyltransferase.